Here is a 120-residue protein sequence, read N- to C-terminus: Large ribosomal subunit protein uL18 (120 aa).

The interval 1 to 22 (MKTTRKESLKRRHRRIRRKVSG) is disordered. A compositionally biased stretch (basic residues) spans 8-20 (SLKRRHRRIRRKV).

It belongs to the universal ribosomal protein uL18 family. As to quaternary structure, part of the 50S ribosomal subunit; part of the 5S rRNA/L5/L18/L25 subcomplex. Contacts the 5S and 23S rRNAs.

Functionally, this is one of the proteins that bind and probably mediate the attachment of the 5S RNA into the large ribosomal subunit, where it forms part of the central protuberance. The protein is Large ribosomal subunit protein uL18 of Crocosphaera subtropica (strain ATCC 51142 / BH68) (Cyanothece sp. (strain ATCC 51142)).